The following is a 131-amino-acid chain: MYMDPISDLLLRIKTGTKTKRNSVVVKTSKLVTNILEILKNEGYIEGFKTESIGKNKNQTVVNLKYRNNVSSITGLKQISKPGLRIYSEAQKLPKVLNGLGIAIISTSMGLMTDKNAKKNNVGGEVIAYVW.

The protein belongs to the universal ribosomal protein uS8 family. Part of the 30S ribosomal subunit. Contacts proteins S5 and S12.

One of the primary rRNA binding proteins, it binds directly to 16S rRNA central domain where it helps coordinate assembly of the platform of the 30S subunit. The sequence is that of Small ribosomal subunit protein uS8 from Malacoplasma penetrans (strain HF-2) (Mycoplasma penetrans).